The chain runs to 245 residues: 5-oxoprolinase subunit A (245 aa).

This sequence belongs to the LamB/PxpA family. Forms a complex composed of PxpA, PxpB and PxpC.

The enzyme catalyses 5-oxo-L-proline + ATP + 2 H2O = L-glutamate + ADP + phosphate + H(+). Functionally, catalyzes the cleavage of 5-oxoproline to form L-glutamate coupled to the hydrolysis of ATP to ADP and inorganic phosphate. The polypeptide is 5-oxoprolinase subunit A (Yersinia enterocolitica serotype O:8 / biotype 1B (strain NCTC 13174 / 8081)).